The following is a 142-amino-acid chain: Nucleoside diphosphate kinase (142 aa).

ATP is bound by residues Lys11, Phe59, Arg87, Thr93, Arg107, and Asn117. The active-site Pros-phosphohistidine intermediate is the His120.

This sequence belongs to the NDK family. Homotetramer. It depends on Mg(2+) as a cofactor.

The protein resides in the cytoplasm. The catalysed reaction is a 2'-deoxyribonucleoside 5'-diphosphate + ATP = a 2'-deoxyribonucleoside 5'-triphosphate + ADP. The enzyme catalyses a ribonucleoside 5'-diphosphate + ATP = a ribonucleoside 5'-triphosphate + ADP. In terms of biological role, major role in the synthesis of nucleoside triphosphates other than ATP. The ATP gamma phosphate is transferred to the NDP beta phosphate via a ping-pong mechanism, using a phosphorylated active-site intermediate. This is Nucleoside diphosphate kinase from Aquifex aeolicus (strain VF5).